The primary structure comprises 235 residues: Ribosomal RNA small subunit methyltransferase G (235 aa).

Residues Gly98, Met103, 149-150 (VE), and Arg164 contribute to the S-adenosyl-L-methionine site.

Belongs to the methyltransferase superfamily. RNA methyltransferase RsmG family.

The protein localises to the cytoplasm. It carries out the reaction guanosine(527) in 16S rRNA + S-adenosyl-L-methionine = N(7)-methylguanosine(527) in 16S rRNA + S-adenosyl-L-homocysteine. Specifically methylates the N7 position of guanine in position 527 of 16S rRNA. The polypeptide is Ribosomal RNA small subunit methyltransferase G (Cupriavidus pinatubonensis (strain JMP 134 / LMG 1197) (Cupriavidus necator (strain JMP 134))).